A 228-amino-acid chain; its full sequence is 2,3-bisphosphoglycerate-dependent phosphoglycerate mutase (228 aa).

Substrate-binding positions include 8 to 15 (RHGQSAWN), 21 to 22 (TG), arginine 60, 87 to 90 (ERHY), lysine 98, 114 to 115 (RR), and 180 to 181 (GN). The active-site Tele-phosphohistidine intermediate is histidine 9. The active-site Proton donor/acceptor is the glutamate 87.

Belongs to the phosphoglycerate mutase family. BPG-dependent PGAM subfamily. As to quaternary structure, homodimer.

The enzyme catalyses (2R)-2-phosphoglycerate = (2R)-3-phosphoglycerate. It functions in the pathway carbohydrate degradation; glycolysis; pyruvate from D-glyceraldehyde 3-phosphate: step 3/5. In terms of biological role, catalyzes the interconversion of 2-phosphoglycerate and 3-phosphoglycerate. This chain is 2,3-bisphosphoglycerate-dependent phosphoglycerate mutase, found in Rhizorhabdus wittichii (strain DSM 6014 / CCUG 31198 / JCM 15750 / NBRC 105917 / EY 4224 / RW1) (Sphingomonas wittichii).